Consider the following 172-residue polypeptide: Adenine phosphoribosyltransferase (172 aa).

This sequence belongs to the purine/pyrimidine phosphoribosyltransferase family. As to quaternary structure, homodimer.

The protein resides in the cytoplasm. It carries out the reaction AMP + diphosphate = 5-phospho-alpha-D-ribose 1-diphosphate + adenine. Its pathway is purine metabolism; AMP biosynthesis via salvage pathway; AMP from adenine: step 1/1. Its function is as follows. Catalyzes a salvage reaction resulting in the formation of AMP, that is energically less costly than de novo synthesis. This Clostridium botulinum (strain Eklund 17B / Type B) protein is Adenine phosphoribosyltransferase.